We begin with the raw amino-acid sequence, 71 residues long: Small ribosomal subunit protein bS21 (71 aa).

Positions 49 to 59 (KAAAVKRAAKK) are enriched in basic residues. The interval 49 to 71 (KAAAVKRAAKKVSRENARRVRMY) is disordered. Residues 60–71 (VSRENARRVRMY) show a composition bias toward basic and acidic residues.

The protein belongs to the bacterial ribosomal protein bS21 family.

This chain is Small ribosomal subunit protein bS21, found in Colwellia psychrerythraea (strain 34H / ATCC BAA-681) (Vibrio psychroerythus).